The following is a 308-amino-acid chain: Ribonuclease Z (308 aa).

Zn(2+) contacts are provided by H62, H64, D66, H67, H140, D211, and H269. D66 acts as the Proton acceptor in catalysis.

Belongs to the RNase Z family. In terms of assembly, homodimer. The cofactor is Zn(2+).

The catalysed reaction is Endonucleolytic cleavage of RNA, removing extra 3' nucleotides from tRNA precursor, generating 3' termini of tRNAs. A 3'-hydroxy group is left at the tRNA terminus and a 5'-phosphoryl group is left at the trailer molecule.. In terms of biological role, zinc phosphodiesterase, which displays some tRNA 3'-processing endonuclease activity. Probably involved in tRNA maturation, by removing a 3'-trailer from precursor tRNA. This is Ribonuclease Z from Treponema denticola (strain ATCC 35405 / DSM 14222 / CIP 103919 / JCM 8153 / KCTC 15104).